A 633-amino-acid chain; its full sequence is 1-deoxy-D-xylulose-5-phosphate synthase (633 aa).

Thiamine diphosphate contacts are provided by residues His-72 and 113 to 115; that span reads GHS. Residue Asp-144 coordinates Mg(2+). Residues 145–146, Asn-173, Tyr-284, and Glu-367 contribute to the thiamine diphosphate site; that span reads GA. Asn-173 contributes to the Mg(2+) binding site.

It belongs to the transketolase family. DXPS subfamily. In terms of assembly, homodimer. Mg(2+) serves as cofactor. Thiamine diphosphate is required as a cofactor.

It catalyses the reaction D-glyceraldehyde 3-phosphate + pyruvate + H(+) = 1-deoxy-D-xylulose 5-phosphate + CO2. The protein operates within metabolic intermediate biosynthesis; 1-deoxy-D-xylulose 5-phosphate biosynthesis; 1-deoxy-D-xylulose 5-phosphate from D-glyceraldehyde 3-phosphate and pyruvate: step 1/1. Its function is as follows. Catalyzes the acyloin condensation reaction between C atoms 2 and 3 of pyruvate and glyceraldehyde 3-phosphate to yield 1-deoxy-D-xylulose-5-phosphate (DXP). The polypeptide is 1-deoxy-D-xylulose-5-phosphate synthase (Bacillus licheniformis (strain ATCC 14580 / DSM 13 / JCM 2505 / CCUG 7422 / NBRC 12200 / NCIMB 9375 / NCTC 10341 / NRRL NRS-1264 / Gibson 46)).